Consider the following 152-residue polypeptide: Transcriptional regulator MraZ (152 aa).

SpoVT-AbrB domains are found at residues 5-52 and 81-124; these read ASSL…PLAQ and ATEY…DEAR.

Belongs to the MraZ family. As to quaternary structure, forms oligomers.

It is found in the cytoplasm. Its subcellular location is the nucleoid. The chain is Transcriptional regulator MraZ from Pseudoalteromonas translucida (strain TAC 125).